The sequence spans 116 residues: Non-specific lipid-transfer protein AP10 (116 aa).

A signal peptide spans 1–26 (MKGTSMGVAILAMIVMAQLMVHPSVA). 4 disulfide bridges follow: Cys29–Cys76, Cys39–Cys53, Cys54–Cys98, and Cys74–Cys112.

Belongs to the plant LTP family. As to expression, in germinating seeds, detected in the entire surface of the cotyledons, shoot meristem, inter-cotyledon space, primary xylem and immature vascular elements (at protein level). Expressed in seeds, but not the aerial parts of the plant.

It localises to the secreted. The protein localises to the extracellular space. Its subcellular location is the membrane. Plant non-specific lipid-transfer proteins transfer phospholipids as well as galactolipids across membranes. May play a role in wax or cutin deposition in the cell walls of expanding epidermal cells and certain secretory tissues. Permeabilizes the membrane of fungal spores, inhibits germination of the spores of the fungus F.solani at a concentration of 40 ug/ml. Inhibits the growth of F.solani with an IC(50) of 6.5 ug/ml, weakly inhibits the growth of the fungus A.alternata. Binds oleoyl-CoA. The sequence is that of Non-specific lipid-transfer protein AP10 from Helianthus annuus (Common sunflower).